The following is a 118-amino-acid chain: Putative membrane protein insertion efficiency factor (118 aa).

The protein belongs to the UPF0161 family.

The protein localises to the cell inner membrane. Could be involved in insertion of integral membrane proteins into the membrane. The chain is Putative membrane protein insertion efficiency factor from Helicobacter pylori (strain P12).